The following is a 246-amino-acid chain: MAQQGSGYQARYKRILLKLSGEALMGSEEFGIDPKVLDRMALEVGQLVGIGVQVGLVIGGGNLFRGAALSAAGMDRVTGDHMGMLATVMNALAMRDALERANITAIVMSAISMVGVTDHYDRRKAMRHLSAKEVVIFAAGTGNPFFTTDSAACLRAIEIDADVVLKATKVDGVYTADPFKDPNAEKFDHLTYDEVLDRKLGVMDLTAICLCRDHKMPLRVFNMNKPGALLNIVHGGAEGTLIEEAQ.

Position 18 to 21 (18 to 21 (KLSG)) interacts with ATP. Gly-60 lines the UMP pocket. ATP-binding residues include Gly-61 and Arg-65. Residues Asp-80 and 141–148 (TGNPFFTT) contribute to the UMP site. Positions 168, 174, and 177 each coordinate ATP.

This sequence belongs to the UMP kinase family. Homohexamer.

Its subcellular location is the cytoplasm. The enzyme catalyses UMP + ATP = UDP + ADP. It participates in pyrimidine metabolism; CTP biosynthesis via de novo pathway; UDP from UMP (UMPK route): step 1/1. Inhibited by UTP. Catalyzes the reversible phosphorylation of UMP to UDP. The protein is Uridylate kinase of Pseudomonas syringae pv. syringae (strain B728a).